A 1100-amino-acid polypeptide reads, in one-letter code: MRKDERERDAPAMRSPPPPPASAASPPESLRNGYVKSCVSPLRQDPPRSFFFHLCRFCNVEPPAASLRAGARLSLGVLAAFVLAALLGARPERWAAAAAGLRTLLSACSLSLSPLFSIACAFFFLTCFLTRAQRGPGRGAGSWWLLALPACCYLGDFAAWQWWSWLRGEPAAAGRLCLVLSCVGLLTLAPRVRLRHGVLVLLFAGLVWWVSFSGLGALPPALRPLLSCLVGGAGCLLALGLDHFFHVRGASPPPRSASTAEEKVPVIRPRRRSSCVSLGESAAGYYGSGKMFRRPSLPCISREQMILWDWDLKQWCKPHYQNSGGGNGVDLSVLNEARNMVSDLLIDPSLPPQVISSLRSISSLMGAFSGSCRPKINSFTPFPGFYPCSEVEDPVEKGDRKLHKGLSGRTSFPTPQLRRSSGASSLLTNEHCSRWDRSSGKRSYQELSVSSHGCHLNGPFSSNLFTIPKQRSSSVSLTHHAGLRRAGALPSHSLLNSSSHVPVSAGSLTNRSPIGFPDTTDFLTKPNIILHRSLGSVSSAADFHQYLRNSDSNLCSSCGHQILKYVSTCEPDGTDHPSEKSGEEDSSVFSKEPLNIVETQEEETMKKACRELFLEGDSHLMEEAQQPNIDQEVSLDPMLVEDYDSLIEKMNNWNFQIFELVEKMGEKSGRILSQVMYTLFQDTGLLETFKIPTQEFMNYFRALENGYRDIPYHNRVHATDVLHAVWYLTTRPIPGLPQIHNNHETETKADSDGRLGSGQIAYISSKSCCIPDMSYGCLSSNIPALELMALYVAAAMHDYDHPGRTNAFLVATNAPQAVLYNDRSVLENHHAASAWNLYLSRPEYNFLLNLDHMEFKRFRFLVIEAILATDLKKHFDFLAEFNAKANDVNSNGIEWSSENDRLLVCQVCIKLADINGPAKDRDLHLRWTEGIVNEFYEQGDEEAALGLPISPFMDRSSPQLAKLQESFITHIVGPLCNSYDAAGLLPGQWIETEEGDDTESDDDDDDDDGDGGEELDSDDEETEDNLNPKPQRRKGRRRIFCQLMHHLTENHKIWKEIIEEEEEKCKAEGNKLQVDNASLPQADEIQVIEEADEEEEQMFE.

Over residues 1-11 (MRKDERERDAP) the composition is skewed to basic and acidic residues. Positions 1–28 (MRKDERERDAPAMRSPPPPPASAASPPE) are interaction with RAPGEF3. The tract at residues 1–29 (MRKDERERDAPAMRSPPPPPASAASPPES) is disordered. Ser15 is modified (phosphoserine). Transmembrane regions (helical) follow at residues 69-89 (AGARLSLGVLAAFVLAALLGA), 110-130 (LSLSPLFSIACAFFFLTCFLT), 140-160 (AGSWWLLALPACCYLGDFAAW), 170-190 (PAAAGRLCLVLSCVGLLTLAP), 198-218 (VLVLLFAGLVWWVSFSGLGAL), and 225-245 (LLSCLVGGAGCLLALGLDHFF). Ser273 carries the phosphoserine; by PKB/AKT1 or PKB/AKT2 modification. Residues Ser274 and Ser421 each carry the phosphoserine modification. Disordered stretches follow at residues 400-423 (RKLHKGLSGRTSFPTPQLRRSSGA) and 570-590 (EPDGTDHPSEKSGEEDSSVFS). A compositionally biased stretch (polar residues) spans 408-423 (GRTSFPTPQLRRSSGA). The segment at 415-439 (PQLRRSSGASSLLTNEHCSRWDRSS) is interaction with PIK3R6. Residues 573 to 583 (GTDHPSEKSGE) are compositionally biased toward basic and acidic residues. In terms of domain architecture, PDEase spans 627-1061 (PNIDQEVSLD…KIWKEIIEEE (435 aa)). His713 (proton donor) is an active-site residue. His713 contributes to the AMP binding site. Mg(2+) contacts are provided by His717, His797, Asp798, and Asp913. 3 residues coordinate AMP: Asp798, Asp913, and Gln964. The segment covering 993–1024 (EEGDDTESDDDDDDDDGDGGEELDSDDEETED) has biased composition (acidic residues). The tract at residues 993-1033 (EEGDDTESDDDDDDDDGDGGEELDSDDEETEDNLNPKPQRR) is disordered. Residues 1044–1079 (MHHLTENHKIWKEIIEEEEEKCKAEGNKLQVDNASL) are a coiled coil.

The protein belongs to the cyclic nucleotide phosphodiesterase family. PDE3 subfamily. In terms of assembly, homodimer. Interacts with PIK3CG; regulates PDE3B activity and thereby cAMP levels in cells. Interacts with RAPGEF3 and PIK3R6; form a signaling complex that regulates phosphatidylinositol 3-kinase gamma in angiogenesis. Interacts with ABHD15; this interaction regulates PDE3B's stability and expression and, thereby, impacts the antilipolytic action of insulin. Requires Mg(2+) as cofactor. It depends on Mn(2+) as a cofactor. In terms of processing, phosphorylation at Ser-273 mediates insulin-induced activation of PDE3B. As to expression, abundant in adipose tissues.

The protein localises to the membrane. It carries out the reaction a nucleoside 3',5'-cyclic phosphate + H2O = a nucleoside 5'-phosphate + H(+). The enzyme catalyses 3',5'-cyclic AMP + H2O = AMP + H(+). The catalysed reaction is 3',5'-cyclic GMP + H2O = GMP + H(+). Inhibited by cGMP. Cyclic nucleotide phosphodiesterase with a dual-specificity for the second messengers cAMP and cGMP, which are key regulators of many important physiological processes. Regulates angiogenesis by inhibiting the cAMP-dependent guanine nucleotide exchange factor RAPGEF3 and downstream phosphatidylinositol 3-kinase gamma-mediated signaling. Controls cardiac contractility by reducing cAMP concentration in cardiocytes. This is cGMP-inhibited 3',5'-cyclic phosphodiesterase 3B from Mus musculus (Mouse).